The following is an 834-amino-acid chain: Probable phosphoenolpyruvate synthase (834 aa).

Catalysis depends on H447, which acts as the Tele-phosphohistidine intermediate. The substrate site is built by R550, R598, E699, G720, S721, N722, and D723. Position 699 (E699) interacts with Mg(2+). D723 provides a ligand contact to Mg(2+). C772 serves as the catalytic Proton donor.

The protein belongs to the PEP-utilizing enzyme family. As to quaternary structure, homooligomer. Forms a large complex of about 2000 kDa. Mg(2+) is required as a cofactor. Post-translationally, the N-terminus is blocked.

It carries out the reaction pyruvate + ATP + H2O = phosphoenolpyruvate + AMP + phosphate + 2 H(+). The protein operates within carbohydrate biosynthesis; gluconeogenesis. Its function is as follows. Catalyzes the phosphorylation of pyruvate to phosphoenolpyruvate. The sequence is that of Probable phosphoenolpyruvate synthase (ppsA) from Staphylothermus marinus (strain ATCC 43588 / DSM 3639 / JCM 9404 / F1).